A 313-amino-acid polypeptide reads, in one-letter code: Short-chain dehydrogenase/reductase family 9C member 7 (313 aa).

F29–L53 provides a ligand contact to NADP(+). S160 serves as a coordination point for substrate. The Proton acceptor role is filled by Y172. S185 bears the Phosphoserine mark.

This sequence belongs to the short-chain dehydrogenases/reductases (SDR) family. In terms of tissue distribution, expressed in the skin. Expressed in granular and cornified layers of the epidermis (at protein level). Highly expressed in liver.

The protein resides in the cytoplasm. It carries out the reaction a N-[omega-(9R,10R)-epoxy-(13R)-hydroxy-(11E)-octadecenoyloxy]acyl-beta-D-glucosyl-(1&lt;-&gt;1)-sphing-4E-enine + NAD(+) = a N-[omega-(9R,10R)-epoxy-13-oxo-(11E)-octadecenoyloxy]acyl-beta-D-glucosyl-(1&lt;-&gt;1)-sphing-4E-enine + NADH + H(+). It catalyses the reaction a N-[omega-(9R,10R)-epoxy-(13R)-hydroxy-(11E)-octadecenoyloxy]-acylsphing-4E-enine + NAD(+) = a N-[omega-(9R,10R)-epoxy-13-oxo-(11E)-octadecenoyloxy]-acylsphing-4E-enine + NADH + H(+). In terms of biological role, plays a crucial role in the formation of the epidermal permeability barrier. Catalyzes the NAD+-dependent dehydrogenation of the linoleate 9,10-trans-epoxy-11E-13-alcohol esterified in omega-O-acylceramides (such as in N-[omega-(9R,10R)-epoxy-(13R)-hydroxy-(11E)-octadecenoyloxy]-acylsphing-4E-enine) to the corresponding 13-ketone, the reactive moiety required for binding of epidermal ceramides to proteins. Displays weak conversion of all-trans-retinal to all-trans-retinol in the presence of NADH. Has apparently no steroid dehydrogenase activity. This Homo sapiens (Human) protein is Short-chain dehydrogenase/reductase family 9C member 7 (SDR9C7).